Here is a 539-residue protein sequence, read N- to C-terminus: Chaperonin GroEL (539 aa).

Residues 30 to 33 (TLGP), Lys51, 87 to 91 (DGTTT), Gly415, 479 to 481 (NAA), and Asp495 contribute to the ATP site.

Belongs to the chaperonin (HSP60) family. In terms of assembly, forms a cylinder of 14 subunits composed of two heptameric rings stacked back-to-back. Interacts with the co-chaperonin GroES.

The protein localises to the cytoplasm. It catalyses the reaction ATP + H2O + a folded polypeptide = ADP + phosphate + an unfolded polypeptide.. Together with its co-chaperonin GroES, plays an essential role in assisting protein folding. The GroEL-GroES system forms a nano-cage that allows encapsulation of the non-native substrate proteins and provides a physical environment optimized to promote and accelerate protein folding. The chain is Chaperonin GroEL from Enterobacter asburiae.